Consider the following 197-residue polypeptide: ADP-ribosylation factor-like protein 6-interacting protein 1 (197 aa).

Transmembrane regions (helical) follow at residues 43–63, 64–84, 129–149, and 150–170; these read VVFG…LSLI, TLLS…PMVS, TVFV…GAII, and NNLL…GLQN.

The protein belongs to the ARL6ip family.

It localises to the membrane. The protein is ADP-ribosylation factor-like protein 6-interacting protein 1 of Drosophila melanogaster (Fruit fly).